The following is a 121-amino-acid chain: Large ribosomal subunit protein bL12 (121 aa).

This sequence belongs to the bacterial ribosomal protein bL12 family. In terms of assembly, homodimer. Part of the ribosomal stalk of the 50S ribosomal subunit. Forms a multimeric L10(L12)X complex, where L10 forms an elongated spine to which 2 to 4 L12 dimers bind in a sequential fashion. Binds GTP-bound translation factors.

Its function is as follows. Forms part of the ribosomal stalk which helps the ribosome interact with GTP-bound translation factors. Is thus essential for accurate translation. This chain is Large ribosomal subunit protein bL12, found in Oenococcus oeni (strain ATCC BAA-331 / PSU-1).